The sequence spans 251 residues: Small ribosomal subunit protein uS2 (251 aa).

This sequence belongs to the universal ribosomal protein uS2 family.

The chain is Small ribosomal subunit protein uS2 from Chlorobium chlorochromatii (strain CaD3).